Reading from the N-terminus, the 217-residue chain is Glycine betaine/carnitine/choline transport system permease protein OpuCB (217 aa).

The ABC transmembrane type-1 domain occupies 19–198; that stretch reads TGEHLYISLI…ILAIIIDYVL (180 aa). 6 consecutive transmembrane segments (helical) span residues 23–43, 52–74, 84–101, 128–148, 150–170, and 180–200; these read LYIS…LGVA, GAVI…AFFI, AIVA…RNTY, LVEI…STIY, IGWA…YIFI, and IIGG…VLAV.

This sequence belongs to the binding-protein-dependent transport system permease family. CysTW subfamily. As to quaternary structure, the complex is composed of two ATP-binding proteins (OpuCA), two transmembrane proteins (OpuCB and OpuCD) and a solute-binding protein (OpuCC).

The protein resides in the cell membrane. Its function is as follows. Involved in a high affinity multicomponent binding-protein-dependent transport system for glycine betaine, carnitine and choline; probably responsible for the translocation of the substrate across the membrane. The protein is Glycine betaine/carnitine/choline transport system permease protein OpuCB (opuCB) of Bacillus subtilis (strain 168).